The primary structure comprises 465 residues: Na(+)-translocating NADH-quinone reductase subunit A (465 aa).

Belongs to the NqrA family. As to quaternary structure, composed of six subunits; NqrA, NqrB, NqrC, NqrD, NqrE and NqrF.

It carries out the reaction a ubiquinone + n Na(+)(in) + NADH + H(+) = a ubiquinol + n Na(+)(out) + NAD(+). Functionally, NQR complex catalyzes the reduction of ubiquinone-1 to ubiquinol by two successive reactions, coupled with the transport of Na(+) ions from the cytoplasm to the periplasm. NqrA to NqrE are probably involved in the second step, the conversion of ubisemiquinone to ubiquinol. In Chlamydia trachomatis serovar A (strain ATCC VR-571B / DSM 19440 / HAR-13), this protein is Na(+)-translocating NADH-quinone reductase subunit A.